The chain runs to 188 residues: RxLR effector protein Avh241 (188 aa).

The first 16 residues, 1–16 (MRQYCLLLIVLALAAA), serve as a signal peptide directing secretion. The RxLR-dEER motif lies at 43–58 (RLLRSEPQDEDTFEDR). The short motif at 73-78 (GAAKAK) is the Host plasma membrane localization motif element.

The protein belongs to the RxLR effector family.

It is found in the secreted. The protein localises to the host cell membrane. Functionally, effector that triggers cell death in a variety of plant species (including tobacco, tomato and soybean), regardless of the Rps genes present. Avh241 interacts with the plant immune system via at least two different mechanisms, one recognized by plants dependent on subcellular localization and one promoting infection independent on membrane localization. The cell death triggered by Avh241 in N.benthamiana requires the two host mitogen-activated protein kinases, MEK2 and WIPK. The protein is RxLR effector protein Avh241 of Phytophthora sojae (strain P6497) (Soybean stem and root rot agent).